The chain runs to 542 residues: Leucine-rich repeat-containing protein 56 (542 aa).

5 LRR repeats span residues 94 to 115 (NLDQ…GTSL), 117 to 138 (HLQV…ASLP), 139 to 160 (ALKE…CLLE), 161 to 182 (QLEV…RYLQ), and 186 to 206 (RLAM…PGPT). The LRRCT domain maps to 207 to 250 (NKVPRGYNYRAEVRKLIPQLQVLDEVPAAHTGPPAPPRLSQDWL). Disordered regions lie at residues 308–377 (LLSE…ADSS), 396–475 (LPYR…LQSR), and 507–542 (RLSP…PVPT). Over residues 416-426 (RVPEEQVHQAE) the composition is skewed to basic and acidic residues. Residues 522–532 (PDAAARPPRAA) show a composition bias toward low complexity.

It belongs to the LRRC56 family. Interacts with IFT88.

It is found in the cell projection. The protein resides in the cilium. Required for the assembly of dynein arms. This chain is Leucine-rich repeat-containing protein 56 (LRRC56), found in Homo sapiens (Human).